The following is a 255-amino-acid chain: Thiazole synthase (255 aa).

The active-site Schiff-base intermediate with DXP is Lys-97. Residues Gly-158, 184 to 185 (AG), and 206 to 207 (NT) each bind 1-deoxy-D-xylulose 5-phosphate.

Belongs to the ThiG family. As to quaternary structure, homotetramer. Forms heterodimers with either ThiH or ThiS.

It is found in the cytoplasm. It catalyses the reaction [ThiS sulfur-carrier protein]-C-terminal-Gly-aminoethanethioate + 2-iminoacetate + 1-deoxy-D-xylulose 5-phosphate = [ThiS sulfur-carrier protein]-C-terminal Gly-Gly + 2-[(2R,5Z)-2-carboxy-4-methylthiazol-5(2H)-ylidene]ethyl phosphate + 2 H2O + H(+). Its pathway is cofactor biosynthesis; thiamine diphosphate biosynthesis. In terms of biological role, catalyzes the rearrangement of 1-deoxy-D-xylulose 5-phosphate (DXP) to produce the thiazole phosphate moiety of thiamine. Sulfur is provided by the thiocarboxylate moiety of the carrier protein ThiS. In vitro, sulfur can be provided by H(2)S. The chain is Thiazole synthase from Moorella thermoacetica (strain ATCC 39073 / JCM 9320).